We begin with the raw amino-acid sequence, 136 residues long: Small ribosomal subunit protein uS12 (136 aa).

A disordered region spans residues 1–28 (MPTIQQLIRSERQELKKKTKSPALKSCP). Residue Asp89 is modified to 3-methylthioaspartic acid. Residues 101–136 (TLDTAGVKDRKQGRSKYGAKRPKPGAASTASTGKKR) are disordered. The segment covering 113-123 (GRSKYGAKRPK) has biased composition (basic residues).

This sequence belongs to the universal ribosomal protein uS12 family. As to quaternary structure, part of the 30S ribosomal subunit. Contacts proteins S8 and S17. May interact with IF1 in the 30S initiation complex.

Functionally, with S4 and S5 plays an important role in translational accuracy. Interacts with and stabilizes bases of the 16S rRNA that are involved in tRNA selection in the A site and with the mRNA backbone. Located at the interface of the 30S and 50S subunits, it traverses the body of the 30S subunit contacting proteins on the other side and probably holding the rRNA structure together. The combined cluster of proteins S8, S12 and S17 appears to hold together the shoulder and platform of the 30S subunit. This chain is Small ribosomal subunit protein uS12, found in Cyanothece sp. (strain PCC 7425 / ATCC 29141).